A 646-amino-acid chain; its full sequence is Preterminal protein (646 aa).

The Nuclear localization signal motif lies at 357–366 (RLPVRRRRRR). Ser555 is modified (O-(5'-phospho-DNA)-serine). The tract at residues 619–646 (LHADVPLPPLQANPHPPLPPDARPQRTM) is disordered. Over residues 624–640 (PLPPLQANPHPPLPPDA) the composition is skewed to pro residues.

Belongs to the adenoviridae terminal protein family. In terms of assembly, heterodimer with the polymerase; this heterodimer binds to bp 9 to 18 of the genome. Interacts with host POU2F1; POU2F1 binds to the auxiliary sequences in the inverted terminal repeats and tethers the pTP-POL heterodimer to the origin DNA thereby participating in the assembly of the pre-initiation complex (POL-TP-DBP-NFIA-POU2F1). Preterminal protein is used to replicate viral genome, upon genomic encapsidation it is processed first into iTP and finally into TP by adenovirus protease.

It localises to the host nucleus matrix. In terms of biological role, protein covalently bound to the viral DNA that acts as a primer for viral genomic replication by DNA strand displacement. Assembles on the viral origin of replication in an initiation complex with viral polymerase, DBP, host NFIA and host POU2F1/OCT1. During initiation, the polymerase covalently couples the first dCTP with Ser-580 of pTP. The terminal protein stimulates the template activity over 20 fold compared to protein-free templates. Neo-synthesized viral genomes are linked to two preterminal proteins, one for each 5' end. These new genomes are encapsidated in the nucleus, and during capsid maturation by viral protease, preterminal protein is first cleaved into intermediary (iTP), then into mature TP. May play a role in host nuclear matrix localization of genomic DNA. This Homo sapiens (Human) protein is Preterminal protein.